The sequence spans 145 residues: Neuromedin-S (145 aa).

An N-terminal signal peptide occupies residues 1-27 (MRSEKHLLPLPLLLAICCLGTLHLSSG). 2 propeptides span residues 28–89 (FPQS…HEIY) and 92–117 (FLFQ…AEYT). Asparagine 136 carries the asparagine amide modification. The propeptide occupies 140 to 145 (VSINEH).

The protein belongs to the NmU family. As to expression, expressed by the skin glands.

The protein localises to the secreted. In terms of biological role, stimulates uterine smooth muscle contraction (EC(50)=1.6 nM). Synthetic peptide NmS-17 induces calcium mobilization in CHO cells transfected with either human FM-3/GPR66 (EC(50)=0.085 nM) or FM-4/TGR-1 (EC(50)=0.231 nM) NmU/NmS receptors. This chain is Neuromedin-S (nms), found in Bombina maxima (Giant fire-bellied toad).